We begin with the raw amino-acid sequence, 102 residues long: Small ribosomal subunit protein uS10 (102 aa).

Belongs to the universal ribosomal protein uS10 family. In terms of assembly, part of the 30S ribosomal subunit.

Involved in the binding of tRNA to the ribosomes. This Pyrococcus abyssi (strain GE5 / Orsay) protein is Small ribosomal subunit protein uS10.